The sequence spans 98 residues: Large ribosomal subunit protein eL21 (98 aa).

Basic residues predominate over residues 1–24 (MVKKAHSFRRKTRGKLSKHPRRRG). Residues 1 to 27 (MVKKAHSFRRKTRGKLSKHPRRRGLPP) form a disordered region.

It belongs to the eukaryotic ribosomal protein eL21 family.

This is Large ribosomal subunit protein eL21 from Thermococcus gammatolerans (strain DSM 15229 / JCM 11827 / EJ3).